Here is a 763-residue protein sequence, read N- to C-terminus: Forkhead box protein M1 (763 aa).

Residues 1 to 53 are disordered; the sequence is MKTSPRRPLILKRRRLPLPVQNAPSETSEEEPKRSPAQQESNQAEASKEVAES. Polar residues predominate over residues 36–45; that stretch reads PAQQESNQAE. Residues lysine 163, lysine 201, and lysine 325 each participate in a glycyl lysine isopeptide (Lys-Gly) (interchain with G-Cter in SUMO2) cross-link. Residues 198–232 form a disordered region; sequence RSIKQEMEEKENCHLEQRQVKVEEPSRPSASWQNS. The segment covering 200–223 has biased composition (basic and acidic residues); it reads IKQEMEEKENCHLEQRQVKVEEPS. Positions 235-327 form a DNA-binding region, fork-head; the sequence is ERPPYSYMAM…LTLDQVFKPL (93 aa). A disordered region spans residues 329 to 351; sequence PGSPQLPEHLESQQKRPNPELRR. A Phosphoserine modification is found at serine 331. Basic and acidic residues predominate over residues 336–351; that stretch reads EHLESQQKRPNPELRR. A Glycyl lysine isopeptide (Lys-Gly) (interchain with G-Cter in SUMO2) cross-link involves residue lysine 356. Serine 376 is subject to Phosphoserine; by CHEK2. Glycyl lysine isopeptide (Lys-Gly) (interchain with G-Cter in SUMO2) cross-links involve residues lysine 422 and lysine 440. The tract at residues 482–711 is disordered; that stretch reads PPLEEWPSPA…PGSPEPQVSG (230 aa). Serine 489 bears the Phosphoserine; by GSK3 mark. Residues 494-503 are compositionally biased toward basic and acidic residues; sequence FKEESSHSWE. At serine 522 the chain carries Phosphoserine. Positions 583-592 are enriched in polar residues; sequence DPASQLSYSQ. Threonine 611 is subject to Phosphothreonine; by CDK1. Phosphothreonine is present on residues threonine 620, threonine 627, and threonine 662. Serine 693 carries the post-translational modification Phosphoserine; by CDK1. Phosphoserine; by PLK1 occurs at positions 730 and 739.

Interacts with PINT87aa which is encoded by the circular form of the long non-coding RNA LINC-PINT; the interaction inhibits FOXM1-mediated transcription of PHB2. Post-translationally, phosphorylated in M (mitotic) phase. Phosphorylation by the checkpoint kinase CHEK2 in response to DNA damage increases the FOXM1 protein stability probably stimulating the transcription of genes involved in DNA repair. Phosphorylated by CDK1 in late S and G2 phases, creating docking sites for the POLO box domains of PLK1. Subsequently, PLK1 binds and phosphorylates FOXM1, leading to activation of transcriptional activity and subsequent enhanced expression of key mitotic regulators. Phosphorylated by GSK3B leading to ubiquitination and proteasomal degradation. In terms of processing, ubiquitinated in a FBXW7-dependent manner leading to proteasomal degradation. In terms of tissue distribution, expressed in thymus, testis, small intestine, colon followed by ovary. Appears to be expressed only in adult organs containing proliferating/cycling cells or in response to growth factors. Also expressed in epithelial cell lines derived from tumors. Not expressed in resting cells. Isoform 2 is highly expressed in testis.

It is found in the nucleus. Its function is as follows. Transcription factor regulating the expression of cell cycle genes essential for DNA replication and mitosis. Plays a role in the control of cell proliferation. Also plays a role in DNA break repair, participating in the DNA damage checkpoint response. Promotes transcription of PHB2. The protein is Forkhead box protein M1 (FOXM1) of Homo sapiens (Human).